Consider the following 247-residue polypeptide: tRNA (guanine-N(1)-)-methyltransferase (247 aa).

Residues glycine 115 and 134 to 139 (IGDFVL) each bind S-adenosyl-L-methionine.

It belongs to the RNA methyltransferase TrmD family. As to quaternary structure, homodimer.

The protein resides in the cytoplasm. It carries out the reaction guanosine(37) in tRNA + S-adenosyl-L-methionine = N(1)-methylguanosine(37) in tRNA + S-adenosyl-L-homocysteine + H(+). Specifically methylates guanosine-37 in various tRNAs. The chain is tRNA (guanine-N(1)-)-methyltransferase from Anaeromyxobacter sp. (strain K).